Here is a 238-residue protein sequence, read N- to C-terminus: Aspartate/glutamate leucyltransferase (238 aa).

This sequence belongs to the R-transferase family. Bpt subfamily.

It is found in the cytoplasm. The enzyme catalyses N-terminal L-glutamyl-[protein] + L-leucyl-tRNA(Leu) = N-terminal L-leucyl-L-glutamyl-[protein] + tRNA(Leu) + H(+). It catalyses the reaction N-terminal L-aspartyl-[protein] + L-leucyl-tRNA(Leu) = N-terminal L-leucyl-L-aspartyl-[protein] + tRNA(Leu) + H(+). Functionally, functions in the N-end rule pathway of protein degradation where it conjugates Leu from its aminoacyl-tRNA to the N-termini of proteins containing an N-terminal aspartate or glutamate. In Aeromonas salmonicida (strain A449), this protein is Aspartate/glutamate leucyltransferase.